Here is a 1730-residue protein sequence, read N- to C-terminus: Nebulin-related-anchoring protein (1730 aa).

The region spanning 4 to 64 (QPCSRCGYGV…HAHNPKNNTF (61 aa)) is the LIM zinc-binding domain. 44 Nebulin repeats span residues 63–97 (TFTS…QCKS), 156–166 (EYTEDYEQPRG), 175–202 (TPAY…ERIS), 203–237 (RFST…QQRG), 246–273 (TPAY…KEMR), 298–307 (YPEEYEEHRG), 316–343 (TPAY…KMKG), 348–382 (HSLP…SSRG), 389–417 (ETPQ…NHMR), 419–453 (RYEG…HDIV), 487–521 (KYSS…KNKL), 522–556 (NYTL…KTKG), 558–592 (GFEM…KTKG), 602–626 (LLHS…ESKT), 627–661 (RFHL…EYTV), 662–692 (LPED…WMKG), 702–724 (NLEQ…RVDE), 726–760 (KFTS…QSVH), 761–795 (QYTI…NQKA), 797–831 (GFEL…RSRG), 844–869 (QMSH…DTKS), 870–896 (QCHV…VGYK), 901–935 (HFTA…WMKG), 945–963 (NVEQ…KYRQ), 969–1003 (KFTS…NIKH), 1004–1038 (HYTP…KLRD), 1040–1074 (GYKL…KMKG), 1078–1112 (GSRS…HSKA), 1113–1139 (QFHL…QDYK), 1144–1178 (QYTS…FMRG), 1183–1206 (IPGT…KYRQ), 1212–1246 (KYTA…DARH), 1247–1281 (EYTM…NLRA), 1283–1317 (GYKL…KERG), 1321–1355 (GPQS…SSQA), 1356–1390 (QFHL…KFTA), 1391–1421 (LPED…GMKG), 1429–1449 (SPQM…KYRK), 1455–1481 (KFTT…RMYR), 1490–1524 (RYTL…QTRA), 1526–1560 (SYDF…RDRG), 1564–1598 (GYRS…KSRS), 1599–1626 (QFHS…HYRQ), and 1640–1664 (LRHA…LTRG). Position 1081 is a phosphoserine (serine 1081). The tract at residues 1595 to 1620 (KSRSQFHSSTDQPGLLQAKRSQQLAS) is disordered. Residues 1596–1606 (SRSQFHSSTDQ) are compositionally biased toward polar residues.

Interacts with actin, alpha-actinin, KLHL41, TLN1 and VCL. Interacts with CSRP3. Expressed in cardiac and skeletal muscle.

Its function is as follows. May be involved in anchoring the terminal actin filaments in the myofibril to the membrane and in transmitting tension from the myofibrils to the extracellular matrix. In Homo sapiens (Human), this protein is Nebulin-related-anchoring protein.